The primary structure comprises 259 residues: Protein unc-50 homolog (259 aa).

Residue methionine 1 is modified to N-acetylmethionine. Over 1-82 (MLPSTSVNSL…TKDQWARDDP (82 aa)) the chain is Cytoplasmic. A Phosphoserine modification is found at serine 6. Residues 83 to 103 (AFLVLLSIWLCVSTIGFGFVL) form a helical membrane-spanning segment. Residues 104–115 (DMGFFETIKLLL) lie on the Lumenal side of the membrane. Residues 116–136 (WVVLIDCVGVGLLIATLMWFI) traverse the membrane as a helical segment. Topologically, residues 137-163 (SNKYLVKRQSRDYDVEWGYAFDVHLNA) are cytoplasmic. The chain crosses the membrane as a helical span at residues 164-184 (FYPLLVILHFIQLFFINHVIL). At 185–187 (TDT) the chain is on the lumenal side. The helical transmembrane segment at 188-208 (FIGYLVGNTLWLVAVGYYIYV) threads the bilayer. Over 209-222 (TFLGYSALPFLKNT) the chain is Cytoplasmic. A helical membrane pass occupies residues 223-243 (VILLYPFAPLILLYGLSLALG). Residues 244 to 259 (WNFTHTLCSFYKYRVK) lie on the Lumenal side of the membrane.

This sequence belongs to the unc-50 family. Present in periodontal ligament fibroblasts (at protein level).

It localises to the nucleus inner membrane. Its subcellular location is the golgi apparatus membrane. Its function is as follows. Involved in the cell surface expression of neuronal nicotinic receptors. Binds RNA. This chain is Protein unc-50 homolog (UNC50), found in Homo sapiens (Human).